The following is a 261-amino-acid chain: 2,3-dihydro-2,3-dihydroxybenzoate dehydrogenase (261 aa).

An NAD(+)-binding site is contributed by 12–36 (FITGAAQGIGEAVARTLASQGAHIA). Ser144 contacts substrate. Catalysis depends on Tyr157, which acts as the Proton acceptor.

It belongs to the short-chain dehydrogenases/reductases (SDR) family.

The protein localises to the cytoplasm. The catalysed reaction is (2S,3S)-2,3-dihydroxy-2,3-dihydrobenzoate + NAD(+) = 2,3-dihydroxybenzoate + NADH + H(+). It participates in siderophore biosynthesis; bacillibactin biosynthesis. The chain is 2,3-dihydro-2,3-dihydroxybenzoate dehydrogenase (dhbA) from Bacillus subtilis (strain 168).